Reading from the N-terminus, the 183-residue chain is Peptide deformylase (183 aa).

Residues Cys110 and His153 each contribute to the Fe cation site. Glu154 is an active-site residue. Fe cation is bound at residue His157.

This sequence belongs to the polypeptide deformylase family. The cofactor is Fe(2+).

The catalysed reaction is N-terminal N-formyl-L-methionyl-[peptide] + H2O = N-terminal L-methionyl-[peptide] + formate. Functionally, removes the formyl group from the N-terminal Met of newly synthesized proteins. Requires at least a dipeptide for an efficient rate of reaction. N-terminal L-methionine is a prerequisite for activity but the enzyme has broad specificity at other positions. The chain is Peptide deformylase from Listeria monocytogenes serovar 1/2a (strain ATCC BAA-679 / EGD-e).